The following is a 114-amino-acid chain: uncharacterized protein (114 aa).

This is an uncharacterized protein from Methanocaldococcus jannaschii (strain ATCC 43067 / DSM 2661 / JAL-1 / JCM 10045 / NBRC 100440) (Methanococcus jannaschii).